We begin with the raw amino-acid sequence, 392 residues long: Cell division protein FtsZ (392 aa).

GTP contacts are provided by residues 24–28 (GGGCN), 111–113 (GTG), E142, R145, and D189.

This sequence belongs to the FtsZ family. Homodimer. Polymerizes to form a dynamic ring structure in a strictly GTP-dependent manner. Interacts directly with several other division proteins.

The protein resides in the cytoplasm. Functionally, essential cell division protein that forms a contractile ring structure (Z ring) at the future cell division site. The regulation of the ring assembly controls the timing and the location of cell division. One of the functions of the FtsZ ring is to recruit other cell division proteins to the septum to produce a new cell wall between the dividing cells. Binds GTP and shows GTPase activity. The protein is Cell division protein FtsZ of Neisseria gonorrhoeae.